Consider the following 194-residue polypeptide: Ion-translocating oxidoreductase complex subunit A (194 aa).

Transmembrane regions (helical) follow at residues 4 to 24 (LVLILVGAILVNNFVLVQFLG), 39 to 59 (IGLALATTFVLTLAAMCSYLL), 72 to 92 (LRTIGFILVIAVVVQFTEMLV), 102 to 122 (VLGIFLPLITTNCIVLGVALL), 135 to 155 (GINGFGAGLGFSLVLVLFAAM), and 172 to 192 (AIGLITAGLMSLAFMGFSGLI).

This sequence belongs to the NqrDE/RnfAE family. As to quaternary structure, the complex is composed of six subunits: RnfA, RnfB, RnfC, RnfD, RnfE and RnfG.

Its subcellular location is the cell inner membrane. Its function is as follows. Part of a membrane-bound complex that couples electron transfer with translocation of ions across the membrane. This Azotobacter vinelandii (strain DJ / ATCC BAA-1303) protein is Ion-translocating oxidoreductase complex subunit A.